The chain runs to 518 residues: Protein nucleotidyltransferase YdiU (518 aa).

A compositionally biased stretch (basic and acidic residues) spans 1–10 (MTHLRFDNRL). Residues 1–23 (MTHLRFDNRLRQQLPGDPEEGSR) are disordered. ATP contacts are provided by G100, G102, R103, K123, D135, G136, R193, and R200. D270 (proton acceptor) is an active-site residue. Positions 271 and 280 each coordinate Mg(2+). Residue D280 coordinates ATP.

The protein belongs to the SELO family. It depends on Mg(2+) as a cofactor. Mn(2+) is required as a cofactor.

It carries out the reaction L-seryl-[protein] + ATP = 3-O-(5'-adenylyl)-L-seryl-[protein] + diphosphate. It catalyses the reaction L-threonyl-[protein] + ATP = 3-O-(5'-adenylyl)-L-threonyl-[protein] + diphosphate. The enzyme catalyses L-tyrosyl-[protein] + ATP = O-(5'-adenylyl)-L-tyrosyl-[protein] + diphosphate. The catalysed reaction is L-histidyl-[protein] + UTP = N(tele)-(5'-uridylyl)-L-histidyl-[protein] + diphosphate. It carries out the reaction L-seryl-[protein] + UTP = O-(5'-uridylyl)-L-seryl-[protein] + diphosphate. It catalyses the reaction L-tyrosyl-[protein] + UTP = O-(5'-uridylyl)-L-tyrosyl-[protein] + diphosphate. Nucleotidyltransferase involved in the post-translational modification of proteins. It can catalyze the addition of adenosine monophosphate (AMP) or uridine monophosphate (UMP) to a protein, resulting in modifications known as AMPylation and UMPylation. In Xanthomonas axonopodis pv. citri (strain 306), this protein is Protein nucleotidyltransferase YdiU.